We begin with the raw amino-acid sequence, 242 residues long: Phosphoribosylaminoimidazole-succinocarboxamide synthase (242 aa).

The protein belongs to the SAICAR synthetase family.

It carries out the reaction 5-amino-1-(5-phospho-D-ribosyl)imidazole-4-carboxylate + L-aspartate + ATP = (2S)-2-[5-amino-1-(5-phospho-beta-D-ribosyl)imidazole-4-carboxamido]succinate + ADP + phosphate + 2 H(+). The protein operates within purine metabolism; IMP biosynthesis via de novo pathway; 5-amino-1-(5-phospho-D-ribosyl)imidazole-4-carboxamide from 5-amino-1-(5-phospho-D-ribosyl)imidazole-4-carboxylate: step 1/2. In Ehrlichia chaffeensis (strain ATCC CRL-10679 / Arkansas), this protein is Phosphoribosylaminoimidazole-succinocarboxamide synthase.